A 402-amino-acid chain; its full sequence is WAT1-related protein At5g07050 (402 aa).

Helical transmembrane passes span 20–40, 48–68, 74–94, 109–129, 149–169, 196–216, 229–249, 266–286, 293–313, and 318–338; these read FAMI…KISL, VLVV…AFFF, PKIT…GPVI, TFSC…AVLF, VVTV…VELF, FLKG…LFVL, LSLT…VTFV, LAAA…QGIV, VFAT…GSFV, and IFLG…AVLW. EamA domains lie at 29–159 and 208–337; these read YAGM…MLMT and LAWA…YAVL.

Belongs to the drug/metabolite transporter (DMT) superfamily. Plant drug/metabolite exporter (P-DME) (TC 2.A.7.4) family.

Its subcellular location is the membrane. This chain is WAT1-related protein At5g07050, found in Arabidopsis thaliana (Mouse-ear cress).